The primary structure comprises 336 residues: Ketol-acid reductoisomerase (NADP(+)) (336 aa).

In terms of domain architecture, KARI N-terminal Rossmann spans 1-182 (MAVIYYDKDA…GVTRAGVIET (182 aa)). NADP(+) is bound by residues 25–28 (YGSQ), Arg-48, Ser-51, Ser-53, and 83–86 (DENQ). His-108 is an active-site residue. Residue Gly-134 coordinates NADP(+). The KARI C-terminal knotted domain occupies 183-328 (TFKEETETDL…KELRKMMPWL (146 aa)). Asp-191, Glu-195, Glu-227, and Glu-231 together coordinate Mg(2+). A substrate-binding site is contributed by Ser-252.

This sequence belongs to the ketol-acid reductoisomerase family. Mg(2+) serves as cofactor.

It catalyses the reaction (2R)-2,3-dihydroxy-3-methylbutanoate + NADP(+) = (2S)-2-acetolactate + NADPH + H(+). The enzyme catalyses (2R,3R)-2,3-dihydroxy-3-methylpentanoate + NADP(+) = (S)-2-ethyl-2-hydroxy-3-oxobutanoate + NADPH + H(+). Its pathway is amino-acid biosynthesis; L-isoleucine biosynthesis; L-isoleucine from 2-oxobutanoate: step 2/4. The protein operates within amino-acid biosynthesis; L-valine biosynthesis; L-valine from pyruvate: step 2/4. Functionally, involved in the biosynthesis of branched-chain amino acids (BCAA). Catalyzes an alkyl-migration followed by a ketol-acid reduction of (S)-2-acetolactate (S2AL) to yield (R)-2,3-dihydroxy-isovalerate. In the isomerase reaction, S2AL is rearranged via a Mg-dependent methyl migration to produce 3-hydroxy-3-methyl-2-ketobutyrate (HMKB). In the reductase reaction, this 2-ketoacid undergoes a metal-dependent reduction by NADPH to yield (R)-2,3-dihydroxy-isovalerate. The sequence is that of Ketol-acid reductoisomerase (NADP(+)) from Thermotoga petrophila (strain ATCC BAA-488 / DSM 13995 / JCM 10881 / RKU-1).